A 127-amino-acid chain; its full sequence is Aspartate 1-decarboxylase (127 aa).

The active-site Schiff-base intermediate with substrate; via pyruvic acid is the serine 25. Pyruvic acid (Ser) is present on serine 25. Threonine 57 provides a ligand contact to substrate. Catalysis depends on tyrosine 58, which acts as the Proton donor. A substrate-binding site is contributed by 73–75; that stretch reads GAA.

The protein belongs to the PanD family. Heterooctamer of four alpha and four beta subunits. Pyruvate serves as cofactor. Is synthesized initially as an inactive proenzyme, which is activated by self-cleavage at a specific serine bond to produce a beta-subunit with a hydroxyl group at its C-terminus and an alpha-subunit with a pyruvoyl group at its N-terminus.

It is found in the cytoplasm. It carries out the reaction L-aspartate + H(+) = beta-alanine + CO2. The protein operates within cofactor biosynthesis; (R)-pantothenate biosynthesis; beta-alanine from L-aspartate: step 1/1. Its function is as follows. Catalyzes the pyruvoyl-dependent decarboxylation of aspartate to produce beta-alanine. This is Aspartate 1-decarboxylase from Neisseria meningitidis serogroup C / serotype 2a (strain ATCC 700532 / DSM 15464 / FAM18).